Here is a 226-residue protein sequence, read N- to C-terminus: Prolactin (226 aa).

The signal sequence occupies residues methionine 1–proline 29. Cysteine 33 and cysteine 38 form a disulfide bridge. Serine 53 and serine 117 each carry phosphoserine. 2 cysteine pairs are disulfide-bonded: cysteine 85–cysteine 201 and cysteine 218–cysteine 226.

This sequence belongs to the somatotropin/prolactin family. As to quaternary structure, interacts with PRLR.

It localises to the secreted. Its function is as follows. Prolactin acts primarily on the mammary gland by promoting lactation. This Mesocricetus auratus (Golden hamster) protein is Prolactin (PRL).